The chain runs to 361 residues: Phospho-N-acetylmuramoyl-pentapeptide-transferase (361 aa).

Helical transmembrane passes span 28–48, 74–94, 99–119, 133–153, 168–188, 203–223, 236–256, 263–283, 288–308, and 338–358; these read LAII…IKFL, TMGG…LADL, IWIT…DDYA, SKLL…EYTD, LSLD…VGSS, VPIA…GNLI, TGEL…FLWF, VFMG…ISVI, VVLS…ILQV, and KVVI…LSSL.

This sequence belongs to the glycosyltransferase 4 family. MraY subfamily. Mg(2+) serves as cofactor.

It is found in the cell inner membrane. It catalyses the reaction UDP-N-acetyl-alpha-D-muramoyl-L-alanyl-gamma-D-glutamyl-meso-2,6-diaminopimeloyl-D-alanyl-D-alanine + di-trans,octa-cis-undecaprenyl phosphate = di-trans,octa-cis-undecaprenyl diphospho-N-acetyl-alpha-D-muramoyl-L-alanyl-D-glutamyl-meso-2,6-diaminopimeloyl-D-alanyl-D-alanine + UMP. Its pathway is cell wall biogenesis; peptidoglycan biosynthesis. In terms of biological role, catalyzes the initial step of the lipid cycle reactions in the biosynthesis of the cell wall peptidoglycan: transfers peptidoglycan precursor phospho-MurNAc-pentapeptide from UDP-MurNAc-pentapeptide onto the lipid carrier undecaprenyl phosphate, yielding undecaprenyl-pyrophosphoryl-MurNAc-pentapeptide, known as lipid I. The chain is Phospho-N-acetylmuramoyl-pentapeptide-transferase from Rickettsia canadensis (strain McKiel).